Consider the following 873-residue polypeptide: Inner centromere protein A (873 aa).

7 disordered regions span residues 50 to 124, 237 to 270, 282 to 452, 484 to 535, 566 to 649, 683 to 736, and 781 to 800; these read AEPE…KRMT, PANEQQLNLSNQSATPTGSKSDRRSVRRSLVVRK, FSLA…PPPH, KRNT…KVRR, QIDE…LAEQ, LERA…EQAA, and DLNSDDSTDDESQPRKPIPA. Positions 60-69 are enriched in basic residues; that stretch reads SQKRRRKKRT. The segment covering 87-105 has biased composition (low complexity); the sequence is RQSNASWSSSVRRLSVRNQ. The span at 239-254 shows a compositional bias: polar residues; it reads NEQQLNLSNQSATPTG. Residues 261–270 show a composition bias toward basic residues; it reads SVRRSLVVRK. A compositionally biased stretch (basic and acidic residues) spans 286-297; that stretch reads SKRESMTREAVR. The span at 314–325 shows a compositional bias: low complexity; it reads SSTSSQRSYQSS. The span at 437-452 shows a compositional bias: pro residues; the sequence is PSPPCPPSKIVRPPPH. 4 stretches are compositionally biased toward basic and acidic residues: residues 491–535, 566–584, 591–649, and 683–733; these read TDPK…KVRR, QIDEKSEKVREDRMAEEKA, KKQE…LAEQ, and LERA…KAKE. The interval 494-707 is SAH; sequence KTEEKERQRL…EERKKREQQE (214 aa). An IN box region spans residues 782–856; that stretch reads LNSDDSTDDE…RTSSAVWHSP (75 aa). 2 positions are modified to phosphoserine: S849 and S850.

Belongs to the INCENP family. Component of the CPC composed of survivin/birc5, incenp, cdca8/borealin and/or cdca9/dasra-A, and aurkb/aurora-B. Interacts (via C-terminus) with aurkb (via N-terminus and kinase domain). Interacts (via N-terminus) with birc5.1, birc5.2, cdca8 and cdca9. Interacts with mtus1.

Its subcellular location is the nucleus. It is found in the chromosome. It localises to the centromere. The protein resides in the cytoplasm. The protein localises to the cytoskeleton. Its subcellular location is the spindle. It is found in the midbody. It localises to the kinetochore. Functionally, component of the chromosomal passenger complex (CPC), a complex that acts as a key regulator of mitosis. The CPC complex has essential functions at the centromere in ensuring correct chromosome alignment and segregation and is required for chromatin-induced microtubule stabilization and spindle assembly. Acts as a scaffold regulating CPC localization and activity. The C-terminus associates with aurkb/aurora-B, the N-terminus associated with cdca8/borealin and/or cdca9/dasra-A tethers the CPC to the inner centromere, and the microtubule binding activity within the central SAH domain directs aurkb/aurora-B toward substrates near microtubules. Activates aurkb. The chain is Inner centromere protein A (incenp-a) from Xenopus laevis (African clawed frog).